Here is a 387-residue protein sequence, read N- to C-terminus: tRNA N6-adenosine threonylcarbamoyltransferase (387 aa).

Positions 112 and 116 each coordinate Fe cation. Residues 134–138 (LASGG), aspartate 167, glycine 180, and asparagine 325 each bind substrate. Position 353 (aspartate 353) interacts with Fe cation.

Belongs to the KAE1 / TsaD family. The cofactor is Fe(2+).

Its subcellular location is the cytoplasm. The catalysed reaction is L-threonylcarbamoyladenylate + adenosine(37) in tRNA = N(6)-L-threonylcarbamoyladenosine(37) in tRNA + AMP + H(+). Required for the formation of a threonylcarbamoyl group on adenosine at position 37 (t(6)A37) in tRNAs that read codons beginning with adenine. Is involved in the transfer of the threonylcarbamoyl moiety of threonylcarbamoyl-AMP (TC-AMP) to the N6 group of A37, together with TsaE and TsaB. TsaD likely plays a direct catalytic role in this reaction. The sequence is that of tRNA N6-adenosine threonylcarbamoyltransferase from Rickettsia prowazekii (strain Madrid E).